A 152-amino-acid chain; its full sequence is Sorting nexin-3 (152 aa).

A PX domain is found at 30–147; that stretch reads NFLEIEVRSP…CAFIQDPQWD (118 aa). Arginine 73, serine 75, lysine 99, arginine 104, and arginine 113 together coordinate a 1,2-diacyl-sn-glycero-3-phospho-(1D-myo-inositol-3-phosphate).

Belongs to the sorting nexin family.

The protein localises to the cytoplasm. It is found in the golgi apparatus membrane. The protein resides in the prevacuolar compartment membrane. Functionally, required for retention of late Golgi membrane proteins. Component of the retrieval machinery that functions by direct interaction with the cytosolic tails of certain TGN membrane proteins during the sorting/budding process at the prevacuolar compartment. Binds phosphatidylinositol 3-phosphate (PtdIns(P3)). The sequence is that of Sorting nexin-3 (SNX3) from Yarrowia lipolytica (strain CLIB 122 / E 150) (Yeast).